Consider the following 137-residue polypeptide: MPTINQLVRQGRKSKTYKSDSPALSRNFNSIKKSYTEANSPQKRGVCTSVRTMTPKKPNSALRKVARVRLTNGMEVLSYIPGIGHNLQEHSVVLIRGGRVKDLPGVRYHIVRGALDTAAVQNRMQGRSKYGAKKPKK.

The tract at residues 1–25 (MPTINQLVRQGRKSKTYKSDSPALS) is disordered. 3-methylthioaspartic acid is present on D102.

It belongs to the universal ribosomal protein uS12 family. Part of the 30S ribosomal subunit. Contacts proteins S8 and S17. May interact with IF1 in the 30S initiation complex.

Functionally, with S4 and S5 plays an important role in translational accuracy. Interacts with and stabilizes bases of the 16S rRNA that are involved in tRNA selection in the A site and with the mRNA backbone. Located at the interface of the 30S and 50S subunits, it traverses the body of the 30S subunit contacting proteins on the other side and probably holding the rRNA structure together. The combined cluster of proteins S8, S12 and S17 appears to hold together the shoulder and platform of the 30S subunit. This chain is Small ribosomal subunit protein uS12, found in Finegoldia magna (strain ATCC 29328 / DSM 20472 / WAL 2508) (Peptostreptococcus magnus).